Reading from the N-terminus, the 634-residue chain is Kelch-like protein 31 (634 aa).

Ala-2 carries the post-translational modification N,N,N-trimethylalanine. Residues 73 to 137 enclose the BTB domain; sequence CDLVIGTKTK…AYTGKLTLSL (65 aa). In terms of domain architecture, BACK spans 172–273; the sequence is CMYVVNIAET…SAQDLVNYVQ (102 aa). Kelch repeat units lie at residues 317 to 365, 366 to 419, 420 to 466, 468 to 513, 515 to 565, and 567 to 614; these read VLVT…VMDG, FLYV…VFNG, LVYA…VADG, VLVT…TLSD, VYVM…ALHG, and AYLV…TLSM.

Post-translationally, N-terminus is methylated by METTL11A/NTM1. Strongly expressed in skeletal muscle and weakly in heart. According to PubMed:15302408, not expressed in other tissues. According to PubMed:18719355, abundantly expressed in both embryonic skeletal and heart tissues.

Transcriptional repressor in MAPK/JNK signaling pathway to regulate cellular functions. Overexpression inhibits the transcriptional activities of both the TPA-response element (TRE) and serum response element (SRE). The protein is Kelch-like protein 31 (KLHL31) of Homo sapiens (Human).